The sequence spans 314 residues: Annexin-like protein RJ4 (314 aa).

Annexin repeat units follow at residues 10–81 (FCAK…RWTL), 82–153 (DPAD…ALVT), 165–236 (KLAN…TAIR), and 240–311 (DPKK…TLLG). 3 residues coordinate Ca(2+): Gly25, Gly27, and Glu67. Ca(2+) contacts are provided by Ile253, Arg255, Gly257, Asp297, and Thr298.

Belongs to the annexin (TC 1.A.31.1) family. Predominantly in developing fruit.

This chain is Annexin-like protein RJ4, found in Fragaria ananassa (Strawberry).